The primary structure comprises 107 residues: uncharacterized protein (107 aa).

Residues 62–79 (LLVVIVYYFSHVGSFSLA) form a helical membrane-spanning segment.

It is found in the nucleus membrane. This is an uncharacterized protein from Schizosaccharomyces pombe (strain 972 / ATCC 24843) (Fission yeast).